We begin with the raw amino-acid sequence, 80 residues long: Small ribosomal subunit protein bS18c (80 aa).

Over residues 1–19 (MKKFISRPKRSSRRRKKTP) the composition is skewed to basic residues. The disordered stretch occupies residues 1 to 24 (MKKFISRPKRSSRRRKKTPIKPGE).

Belongs to the bacterial ribosomal protein bS18 family. In terms of assembly, part of the 30S ribosomal subunit.

Its subcellular location is the plastid. The protein resides in the chloroplast. The polypeptide is Small ribosomal subunit protein bS18c (Staurastrum punctulatum (Green alga)).